A 135-amino-acid polypeptide reads, in one-letter code: Translation initiation factor 2 subunit beta (135 aa).

This sequence belongs to the eIF-2-beta/eIF-5 family. In terms of assembly, heterotrimer composed of an alpha, a beta and a gamma chain.

EIF-2 functions in the early steps of protein synthesis by forming a ternary complex with GTP and initiator tRNA. This Methanothermobacter thermautotrophicus (strain ATCC 29096 / DSM 1053 / JCM 10044 / NBRC 100330 / Delta H) (Methanobacterium thermoautotrophicum) protein is Translation initiation factor 2 subunit beta (eif2b).